We begin with the raw amino-acid sequence, 320 residues long: Cytochrome f (320 aa).

The N-terminal stretch at Met1–Ala35 is a signal peptide. 4 residues coordinate heme: Tyr36, Cys56, Cys59, and His60. The helical transmembrane segment at Val286–Lys306 threads the bilayer.

The protein belongs to the cytochrome f family. The 4 large subunits of the cytochrome b6-f complex are cytochrome b6, subunit IV (17 kDa polypeptide, petD), cytochrome f and the Rieske protein, while the 4 small subunits are PetG, PetL, PetM and PetN. The complex functions as a dimer. The cofactor is heme.

The protein localises to the plastid. It localises to the chloroplast thylakoid membrane. In terms of biological role, component of the cytochrome b6-f complex, which mediates electron transfer between photosystem II (PSII) and photosystem I (PSI), cyclic electron flow around PSI, and state transitions. The chain is Cytochrome f from Barbarea verna (Land cress).